A 192-amino-acid polypeptide reads, in one-letter code: MAKAYVPRLKKQYDDEIIKAMTEKFGYKNAFEVPKLTKIVLNMGVGEATQDKKKVDQAAAEMELIAGQKPVVTRAKKSIAQFKLREGMPIGVKVTLRRERMFEFLDRFLTIALPRVRDFRGLNPKSFDGRGNYATGIKEQLIFPEISYDQVSTIRGMDVVVATTAKTDEEARELLRLFGFPFPADTTQKKAA.

It belongs to the universal ribosomal protein uL5 family. In terms of assembly, part of the 50S ribosomal subunit; part of the 5S rRNA/L5/L18/L25 subcomplex. Contacts the 5S rRNA and the P site tRNA. Forms a bridge to the 30S subunit in the 70S ribosome.

Its function is as follows. This is one of the proteins that bind and probably mediate the attachment of the 5S RNA into the large ribosomal subunit, where it forms part of the central protuberance. In the 70S ribosome it contacts protein S13 of the 30S subunit (bridge B1b), connecting the 2 subunits; this bridge is implicated in subunit movement. Contacts the P site tRNA; the 5S rRNA and some of its associated proteins might help stabilize positioning of ribosome-bound tRNAs. In Zymomonas mobilis subsp. mobilis (strain ATCC 31821 / ZM4 / CP4), this protein is Large ribosomal subunit protein uL5.